Here is an 81-residue protein sequence, read N- to C-terminus: Photosystem I iron-sulfur center (81 aa).

4Fe-4S ferredoxin-type domains are found at residues alanine 2 to tryptophan 31 and isoleucine 39 to tyrosine 68. [4Fe-4S] cluster is bound by residues cysteine 11, cysteine 14, cysteine 17, cysteine 21, cysteine 48, cysteine 51, cysteine 54, and cysteine 58.

The eukaryotic PSI reaction center is composed of at least 11 subunits. [4Fe-4S] cluster serves as cofactor.

The protein resides in the plastid. The protein localises to the chloroplast thylakoid membrane. It catalyses the reaction reduced [plastocyanin] + hnu + oxidized [2Fe-2S]-[ferredoxin] = oxidized [plastocyanin] + reduced [2Fe-2S]-[ferredoxin]. In terms of biological role, apoprotein for the two 4Fe-4S centers FA and FB of photosystem I (PSI); essential for photochemical activity. FB is the terminal electron acceptor of PSI, donating electrons to ferredoxin. The C-terminus interacts with PsaA/B/D and helps assemble the protein into the PSI complex. Required for binding of PsaD and PsaE to PSI. PSI is a plastocyanin-ferredoxin oxidoreductase, converting photonic excitation into a charge separation, which transfers an electron from the donor P700 chlorophyll pair to the spectroscopically characterized acceptors A0, A1, FX, FA and FB in turn. The chain is Photosystem I iron-sulfur center from Gnetum gnemon (Spanish joint-fir).